A 1381-amino-acid chain; its full sequence is DNA-directed RNA polymerase subunit beta (1381 aa).

This sequence belongs to the RNA polymerase beta chain family. The RNAP catalytic core consists of 2 alpha, 1 beta, 1 beta' and 1 omega subunit. When a sigma factor is associated with the core the holoenzyme is formed, which can initiate transcription.

It catalyses the reaction RNA(n) + a ribonucleoside 5'-triphosphate = RNA(n+1) + diphosphate. Functionally, DNA-dependent RNA polymerase catalyzes the transcription of DNA into RNA using the four ribonucleoside triphosphates as substrates. The protein is DNA-directed RNA polymerase subunit beta of Halorhodospira halophila (strain DSM 244 / SL1) (Ectothiorhodospira halophila (strain DSM 244 / SL1)).